Here is a 159-residue protein sequence, read N- to C-terminus: Ribosomal RNA large subunit methyltransferase H (159 aa).

S-adenosyl-L-methionine contacts are provided by residues Leu76, Gly108, and 127 to 132 (FGRLTL).

This sequence belongs to the RNA methyltransferase RlmH family. As to quaternary structure, homodimer.

It is found in the cytoplasm. The enzyme catalyses pseudouridine(1915) in 23S rRNA + S-adenosyl-L-methionine = N(3)-methylpseudouridine(1915) in 23S rRNA + S-adenosyl-L-homocysteine + H(+). Its function is as follows. Specifically methylates the pseudouridine at position 1915 (m3Psi1915) in 23S rRNA. This chain is Ribosomal RNA large subunit methyltransferase H, found in Listeria welshimeri serovar 6b (strain ATCC 35897 / DSM 20650 / CCUG 15529 / CIP 8149 / NCTC 11857 / SLCC 5334 / V8).